Reading from the N-terminus, the 93-residue chain is Small ribosomal subunit protein uS19 (93 aa).

Belongs to the universal ribosomal protein uS19 family.

Functionally, protein S19 forms a complex with S13 that binds strongly to the 16S ribosomal RNA. This chain is Small ribosomal subunit protein uS19, found in Ruminiclostridium cellulolyticum (strain ATCC 35319 / DSM 5812 / JCM 6584 / H10) (Clostridium cellulolyticum).